The sequence spans 511 residues: Cytochrome P450 26B1 (511 aa).

Cysteine 440 provides a ligand contact to heme.

The protein belongs to the cytochrome P450 family. Heme is required as a cofactor.

Its subcellular location is the endoplasmic reticulum membrane. The protein resides in the microsome membrane. The enzyme catalyses all-trans-retinoate + reduced [NADPH--hemoprotein reductase] + O2 = all-trans-4-hydroxyretinoate + oxidized [NADPH--hemoprotein reductase] + H2O + H(+). It catalyses the reaction all-trans-retinoate + reduced [NADPH--hemoprotein reductase] + O2 = all-trans-18-hydroxyretinoate + oxidized [NADPH--hemoprotein reductase] + H2O + H(+). Functionally, a cytochrome P450 monooxygenase involved in the metabolism of retinoates (RAs), the active metabolites of vitamin A, and critical signaling molecules in animals. RAs exist as at least four different isomers: all-trans-RA (atRA), 9-cis-RA, 13-cis-RA, and 9,13-dicis-RA, where atRA is considered to be the biologically active isomer, although 9-cis-RA and 13-cis-RA also have activity. Catalyzes the hydroxylation of atRA primarily at C-4 and C-18, thereby contributing to the regulation of atRA homeostasis and signaling. Hydroxylation of atRA limits its biological activity and initiates a degradative process leading to its eventual elimination. Involved in the convertion of atRA to all-trans-4-oxo-RA. Can oxidize all-trans-13,14-dihydroretinoate (DRA) to metabolites which could include all-trans-4-oxo-DRA, all-trans-4-hydroxy-DRA, all-trans-5,8-epoxy-DRA, and all-trans-18-hydroxy-DRA. This Xenopus tropicalis (Western clawed frog) protein is Cytochrome P450 26B1 (cyp26b1).